The primary structure comprises 419 residues: UDP-N-acetylglucosamine 1-carboxyvinyltransferase (419 aa).

22–23 (KN) contributes to the phosphoenolpyruvate binding site. Residue Arg-93 coordinates UDP-N-acetyl-alpha-D-glucosamine. The active-site Proton donor is Cys-117. The residue at position 117 (Cys-117) is a 2-(S-cysteinyl)pyruvic acid O-phosphothioketal. UDP-N-acetyl-alpha-D-glucosamine contacts are provided by Asp-307 and Ile-329.

It belongs to the EPSP synthase family. MurA subfamily.

The protein resides in the cytoplasm. The enzyme catalyses phosphoenolpyruvate + UDP-N-acetyl-alpha-D-glucosamine = UDP-N-acetyl-3-O-(1-carboxyvinyl)-alpha-D-glucosamine + phosphate. The protein operates within cell wall biogenesis; peptidoglycan biosynthesis. Functionally, cell wall formation. Adds enolpyruvyl to UDP-N-acetylglucosamine. In Shewanella frigidimarina (strain NCIMB 400), this protein is UDP-N-acetylglucosamine 1-carboxyvinyltransferase.